We begin with the raw amino-acid sequence, 97 residues long: Mitochondrial import inner membrane translocase subunit Tim8 A (97 aa).

Positions 43–66 match the Twin CX3C motif motif; that stretch reads CWEKCMDKPGPKLDSRAEACFVNC. Cystine bridges form between Cys-43–Cys-66 and Cys-47–Cys-62. Ser-57, Ser-87, Ser-94, and Ser-96 each carry phosphoserine.

This sequence belongs to the small Tim family. Heterohexamer; composed of 3 copies of TIMM8A and 3 copies of TIMM13, named soluble 70 kDa complex. Associates with the TIM22 complex, whose core is composed of TIMM22. Present at high level in liver and brain, and at lower level in muscle and heart. In CNS sections, it is predominantly present in the soma and the dendritic portion of the Purkinje cells of the cerebellum, but not in the glial cells. Scattered expression also is also detected in the brain stem, olfactory bulb, substantia nigra, hippocampus and striatum (at protein level). Ubiquitously expressed.

The protein resides in the mitochondrion inner membrane. In terms of biological role, mitochondrial intermembrane chaperone that participates in the import and insertion of some multi-pass transmembrane proteins into the mitochondrial inner membrane. Also required for the transfer of beta-barrel precursors from the TOM complex to the sorting and assembly machinery (SAM complex) of the outer membrane. Acts as a chaperone-like protein that protects the hydrophobic precursors from aggregation and guide them through the mitochondrial intermembrane space. The TIMM8-TIMM13 complex mediates the import of proteins such as TIMM23, SLC25A12/ARALAR1 and SLC25A13/ARALAR2, while the predominant TIMM9-TIMM10 70 kDa complex mediates the import of much more proteins. The protein is Mitochondrial import inner membrane translocase subunit Tim8 A (Timm8a1) of Mus musculus (Mouse).